A 225-amino-acid polypeptide reads, in one-letter code: 2-C-methyl-D-erythritol 4-phosphate cytidylyltransferase (225 aa).

The protein belongs to the IspD/TarI cytidylyltransferase family. IspD subfamily.

The enzyme catalyses 2-C-methyl-D-erythritol 4-phosphate + CTP + H(+) = 4-CDP-2-C-methyl-D-erythritol + diphosphate. Its pathway is isoprenoid biosynthesis; isopentenyl diphosphate biosynthesis via DXP pathway; isopentenyl diphosphate from 1-deoxy-D-xylulose 5-phosphate: step 2/6. Functionally, catalyzes the formation of 4-diphosphocytidyl-2-C-methyl-D-erythritol from CTP and 2-C-methyl-D-erythritol 4-phosphate (MEP). The chain is 2-C-methyl-D-erythritol 4-phosphate cytidylyltransferase from Haemophilus influenzae (strain 86-028NP).